Here is a 278-residue protein sequence, read N- to C-terminus: Ferredoxin--NADP reductase A (278 aa).

One can recognise an FAD-binding FR-type domain in the interval 3–103 (PGYTEETVLE…KRATGTLTIG (101 aa)). FAD contacts are provided by residues 52-55 (RAYS) and T118.

The protein belongs to the ferredoxin--NADP reductase type 1 family. The cofactor is FAD.

The enzyme catalyses 2 reduced [4Fe-4S]-[ferredoxin] + NADP(+) + H(+) = 2 oxidized [4Fe-4S]-[ferredoxin] + NADPH. Transports electrons between NADPH and ferredoxin. Can transfer electrons to ferredoxins Fdx2 and Fdx8. Prefers NADPH to NADH. The sequence is that of Ferredoxin--NADP reductase A from Sorangium cellulosum (strain So ce56) (Polyangium cellulosum (strain So ce56)).